The following is a 143-amino-acid chain: NADH-quinone oxidoreductase subunit A (143 aa).

3 consecutive transmembrane segments (helical) span residues 8–28 (FGNVFAFLALGVVFVAGGYLT), 63–83 (FYVVALIFIIFDVEVVFLYPW), and 93–113 (FALIEALVFAGILVLGLAYAW).

It belongs to the complex I subunit 3 family. NDH-1 is composed of 14 different subunits. Subunits NuoA, H, J, K, L, M, N constitute the membrane sector of the complex.

The protein localises to the cell inner membrane. It carries out the reaction a quinone + NADH + 5 H(+)(in) = a quinol + NAD(+) + 4 H(+)(out). Functionally, NDH-1 shuttles electrons from NADH, via FMN and iron-sulfur (Fe-S) centers, to quinones in the respiratory chain. The immediate electron acceptor for the enzyme in this species is believed to be a menaquinone. Couples the redox reaction to proton translocation (for every two electrons transferred, four hydrogen ions are translocated across the cytoplasmic membrane), and thus conserves the redox energy in a proton gradient. The sequence is that of NADH-quinone oxidoreductase subunit A from Pelodictyon phaeoclathratiforme (strain DSM 5477 / BU-1).